The chain runs to 166 residues: Interferon gamma (166 aa).

Positions M1–C23 are cleaved as a signal peptide. Q24 is subject to Pyrrolidone carboxylic acid. N-linked (GlcNAc...) asparagine glycosylation is found at N39 and N106. The tract at residues A147–Q166 is disordered. A compositionally biased stretch (basic residues) spans N148–Q166.

The protein belongs to the type II (or gamma) interferon family. As to quaternary structure, homodimer. Interacts with IFNGR1 (via extracellular domain); this interaction promotes IFNGR1 dimerization. Released primarily from activated T lymphocytes.

The protein resides in the secreted. Functionally, type II interferon produced by immune cells such as T-cells and NK cells that plays crucial roles in antimicrobial, antiviral, and antitumor responses by activating effector immune cells and enhancing antigen presentation. Primarily signals through the JAK-STAT pathway after interaction with its receptor IFNGR1 to affect gene regulation. Upon IFNG binding, IFNGR1 intracellular domain opens out to allow association of downstream signaling components JAK2, JAK1 and STAT1, leading to STAT1 activation, nuclear translocation and transcription of IFNG-regulated genes. Many of the induced genes are transcription factors such as IRF1 that are able to further drive regulation of a next wave of transcription. Plays a role in class I antigen presentation pathway by inducing a replacement of catalytic proteasome subunits with immunoproteasome subunits. In turn, increases the quantity, quality, and repertoire of peptides for class I MHC loading. Increases the efficiency of peptide generation also by inducing the expression of activator PA28 that associates with the proteasome and alters its proteolytic cleavage preference. Up-regulates as well MHC II complexes on the cell surface by promoting expression of several key molecules such as cathepsins B/CTSB, H/CTSH, and L/CTSL. Participates in the regulation of hematopoietic stem cells during development and under homeostatic conditions by affecting their development, quiescence, and differentiation. The protein is Interferon gamma (IFNG) of Equus caballus (Horse).